Here is a 93-residue protein sequence, read N- to C-terminus: Integration host factor subunit beta (93 aa).

The protein belongs to the bacterial histone-like protein family. Heterodimer of an alpha and a beta chain.

This protein is one of the two subunits of integration host factor, a specific DNA-binding protein that functions in genetic recombination as well as in transcriptional and translational control. The sequence is that of Integration host factor subunit beta from Haemophilus ducreyi (strain 35000HP / ATCC 700724).